A 141-amino-acid polypeptide reads, in one-letter code: Endoribonuclease YbeY (141 aa).

Positions 107, 111, and 117 each coordinate Zn(2+).

It belongs to the endoribonuclease YbeY family. Requires Zn(2+) as cofactor.

Its subcellular location is the cytoplasm. In terms of biological role, single strand-specific metallo-endoribonuclease involved in late-stage 70S ribosome quality control and in maturation of the 3' terminus of the 16S rRNA. The protein is Endoribonuclease YbeY of Leptospira interrogans serogroup Icterohaemorrhagiae serovar Lai (strain 56601).